The chain runs to 377 residues: Probable multidrug ABC transporter permease YbhS (377 aa).

At 1–28 the chain is on the cytoplasmic side; that stretch reads MSNPILSWRRVRALCVKETRQIVRDPSS. The helical transmembrane segment at 29–49 threads the bilayer; sequence WLIAVVIPLLLLFIFGYGINL. Residues 50–181 are Periplasmic-facing; that stretch reads DSSKLRVGIL…WFNPAAISQH (132 aa). Residues 145-375 enclose the ABC transmembrane type-2 domain; that stretch reads IWQIWQMQRA…GLTWLKTKRR (231 aa). The chain crosses the membrane as a helical span at residues 182–202; the sequence is FIIPGAVTIIMTVIGAILTSL. Residues 203–234 lie on the Cytoplasmic side of the membrane; that stretch reads VVAREWERGTMEALLSTEITRTELLLCKLIPY. Residues 235–255 form a helical membrane-spanning segment; the sequence is YFLGMLAMLLCMLVSVFILGV. Topologically, residues 256 to 261 are periplasmic; sequence PYRGSL. A helical membrane pass occupies residues 262 to 282; that stretch reads LILFFISSLFLLSTLGMGLLI. Over 283-291 the chain is Cytoplasmic; it reads STITRNQFN. Residues 292–312 traverse the membrane as a helical segment; that stretch reads AAQVALNAAFLPSIMLSGFIF. At 313 to 345 the chain is on the periplasmic side; it reads QIDSMPAVIRAVTYIIPARYFVSTLQSLFLAGN. A helical transmembrane segment spans residues 346-366; it reads IPVVLVVNVLFLIASAVMFIG. At 367–377 the chain is on the cytoplasmic side; that stretch reads LTWLKTKRRLD.

This sequence belongs to the ABC-2 integral membrane protein family. The complex is probably composed of two ATP-binding proteins (YbhF) and two transmembrane proteins (YbhR and YbhS).

The protein resides in the cell inner membrane. In terms of biological role, part of the ABC transporter complex YbhFSR that could be involved in efflux of cefoperazone. Probably involved in the translocation of the substrate across the membrane. This Escherichia coli O157:H7 protein is Probable multidrug ABC transporter permease YbhS (ybhS).